We begin with the raw amino-acid sequence, 144 residues long: Ribosome maturation factor RimP (144 aa).

Belongs to the RimP family.

The protein localises to the cytoplasm. Its function is as follows. Required for maturation of 30S ribosomal subunits. This Azoarcus sp. (strain BH72) protein is Ribosome maturation factor RimP.